The following is a 183-amino-acid chain: MGGRLIYLMGASGSGKDSLLEAVRERVLAAGGRIVRRVVTRSPEAVGEDALGVSPERFEQLLAEGAFALHWRANGLAYGIPRQIDDWLVDGRDVLINGSRGHLAAARRRYPELCAVLLTVEPQVLRQRLLARGRETIEEIEARLARNARLPLDGEDCQRLDNSASLAQTAEALLRLIRKRACA.

The protein belongs to the ribose 1,5-bisphosphokinase family.

It catalyses the reaction alpha-D-ribose 1,5-bisphosphate + ATP = 5-phospho-alpha-D-ribose 1-diphosphate + ADP. Its pathway is metabolic intermediate biosynthesis; 5-phospho-alpha-D-ribose 1-diphosphate biosynthesis; 5-phospho-alpha-D-ribose 1-diphosphate from D-ribose 5-phosphate (route II): step 3/3. Catalyzes the phosphorylation of ribose 1,5-bisphosphate to 5-phospho-D-ribosyl alpha-1-diphosphate (PRPP). The chain is Ribose 1,5-bisphosphate phosphokinase PhnN from Azotobacter vinelandii (strain DJ / ATCC BAA-1303).